A 262-amino-acid chain; its full sequence is Adenosine deaminase RL5 (262 aa).

Residues N36, Y40, M68, H73, C75, N114, C118, H135, C172, C175, C234, and C237 each contribute to the Cu cation site.

This sequence belongs to the purine nucleoside phosphorylase YfiH/LACC1 family. In terms of assembly, homodimer. It depends on Cu cation as a cofactor.

The catalysed reaction is adenosine + phosphate = alpha-D-ribose 1-phosphate + adenine. It catalyses the reaction S-methyl-5'-thioadenosine + phosphate = 5-(methylsulfanyl)-alpha-D-ribose 1-phosphate + adenine. The enzyme catalyses inosine + phosphate = alpha-D-ribose 1-phosphate + hypoxanthine. It carries out the reaction adenosine + H2O + H(+) = inosine + NH4(+). Functionally, purine nucleoside enzyme that catalyzes the phosphorolysis of adenosine and inosine nucleosides, yielding D-ribose 1-phosphate and the respective free bases, adenine and hypoxanthine. Also catalyzes the phosphorolysis of S-methyl-5'-thioadenosine into adenine and S-methyl-5-thio-alpha-D-ribose 1-phosphate. Also has adenosine deaminase activity. Also acts as a multicopper oxidase able to oxidize a wide variety of polyphenols and related compounds in vitro. Displays substrate preference as follows: syringaldazine &gt; 2,6-dimethoxyphenol &gt; veratryl alcohol &gt; guaiacol &gt; tetramethylbenzidine &gt; 4-methoxybenzyl alcohol &gt; 2,2'-azino-bis(3-ethylbenzthiazoline-6-sulfonic acid) (ABTS) &gt;&gt; phenol red &gt; 1-hydroxybenzotriazole. Cannot use 3,4-dimetoxybenzyl alcohol and violuric acid as substrates. As this enzyme is derived from a rumen microbial community, it may have a role in the digestion of complex plant materials such as ryegrass lignin. The protein is Adenosine deaminase RL5 of Unknown prokaryotic organism.